We begin with the raw amino-acid sequence, 323 residues long: MHSTWQPAATIKQLKQRADILNQIRQFFVERNVMEVDTPAMSHATVTDVHLHTFKTEFVGPGYAHGQPLFFMTSPEFHMKRLLAAGSGCIYQICKSFRNEENGRYHNPEFTMLEWYRVGFDHHDLMDEMDLLLQQVLKSGTAERMTYQQAFIDVLGVCPLEDSMDTLKQAAAKLGLSDIADPEQDRDTLLQLLFSIGVEAKIGQQVPAFVYDFPASQAALAKINPNDSRVADRFEVYFKGIELANGFHELDKPQEQLKRFEDDNTKRIEMGLSPQPIDHHLIEALKAGLPDCAGVALGIDRLIMLALGYDHIDDVTAFPFPRS.

Position 74–76 (74–76 (SPE)) interacts with substrate. Residues 98-100 (RNE) and Asn-107 contribute to the ATP site. A substrate-binding site is contributed by Tyr-116. ATP is bound at residue 242–243 (EL). Position 249 (Glu-249) interacts with substrate. Gly-298 lines the ATP pocket.

It belongs to the class-II aminoacyl-tRNA synthetase family. EpmA subfamily. As to quaternary structure, homodimer.

The catalysed reaction is D-beta-lysine + L-lysyl-[protein] + ATP = N(6)-((3R)-3,6-diaminohexanoyl)-L-lysyl-[protein] + AMP + diphosphate + H(+). Its function is as follows. With EpmB is involved in the beta-lysylation step of the post-translational modification of translation elongation factor P (EF-P). Catalyzes the ATP-dependent activation of (R)-beta-lysine produced by EpmB, forming a lysyl-adenylate, from which the beta-lysyl moiety is then transferred to the epsilon-amino group of a conserved specific lysine residue in EF-P. The sequence is that of Elongation factor P--(R)-beta-lysine ligase from Vibrio atlanticus (strain LGP32) (Vibrio splendidus (strain Mel32)).